The chain runs to 392 residues: Glucan endo-1,3-beta-glucosidase 14 (392 aa).

A signal peptide spans 1–21 (MATHSLSFFFRVLLLLFLTLS). N-linked (GlcNAc...) asparagine glycans are attached at residues Asn54 and Asn89. Catalysis depends on Glu122, which acts as the Proton donor. Glu267 functions as the Nucleophile in the catalytic mechanism. Ser359 carries the GPI-anchor amidated serine lipid modification. Positions 360 to 392 (RATTIKILNLWRVVMGLAVAWFILDMGDKMRMR) are cleaved as a propeptide — removed in mature form.

Belongs to the glycosyl hydrolase 17 family.

The protein resides in the cell membrane. It is found in the secreted. The protein localises to the cell wall. Its subcellular location is the cytoplasm. It catalyses the reaction Hydrolysis of (1-&gt;3)-beta-D-glucosidic linkages in (1-&gt;3)-beta-D-glucans.. The sequence is that of Glucan endo-1,3-beta-glucosidase 14 from Arabidopsis thaliana (Mouse-ear cress).